A 183-amino-acid polypeptide reads, in one-letter code: MDSGEQGETSKAPLNKGVSRGVSILDLILRVIAVISTLASAIAMGTTNETLPLFTPFIQFKARYSDLPALTFFVVANSIVSAYLILSLPLSIAHIIRSGAKYSRLVLIIFDAAMLALVTAASSAATAIVYLAHKGNVRANWLAICQQLDSFCERTSGSLVGSFGAMVLLILLILLSAMALARR.

The Cytoplasmic portion of the chain corresponds to 1 to 23; the sequence is MDSGEQGETSKAPLNKGVSRGVS. The helical transmembrane segment at 24 to 44 threads the bilayer; it reads ILDLILRVIAVISTLASAIAM. Over 45–71 the chain is Extracellular; sequence GTTNETLPLFTPFIQFKARYSDLPALT. Asparagine 48 carries N-linked (GlcNAc...) asparagine glycosylation. The chain crosses the membrane as a helical span at residues 72–92; sequence FFVVANSIVSAYLILSLPLSI. The Cytoplasmic segment spans residues 93-104; that stretch reads AHIIRSGAKYSR. Residues 105-125 form a helical membrane-spanning segment; that stretch reads LVLIIFDAAMLALVTAASSAA. Residues 126–158 are Extracellular-facing; it reads TAIVYLAHKGNVRANWLAICQQLDSFCERTSGS. Residues 159-179 form a helical membrane-spanning segment; that stretch reads LVGSFGAMVLLILLILLSAMA. Residues 180 to 183 lie on the Cytoplasmic side of the membrane; that stretch reads LARR.

The protein belongs to the Casparian strip membrane proteins (CASP) family. Homodimer and heterodimers.

It is found in the cell membrane. Regulates membrane-cell wall junctions and localized cell wall deposition. Required for establishment of the Casparian strip membrane domain (CSD) and the subsequent formation of Casparian strips, a cell wall modification of the root endodermis that determines an apoplastic barrier between the intraorganismal apoplasm and the extraorganismal apoplasm and prevents lateral diffusion. In Triticum aestivum (Wheat), this protein is Casparian strip membrane protein 2.